The primary structure comprises 277 residues: Probable cyclic nucleotide phosphodiesterase MCR_0369 (277 aa).

Fe cation is bound by residues aspartate 17, histidine 19, aspartate 53, asparagine 83, histidine 165, histidine 204, and histidine 206. Residues histidine 19, aspartate 53, and 83 to 84 (NH) each bind AMP. AMP is bound at residue histidine 206.

It belongs to the cyclic nucleotide phosphodiesterase class-III family. It depends on Fe(2+) as a cofactor.

The sequence is that of Probable cyclic nucleotide phosphodiesterase MCR_0369 from Moraxella catarrhalis (strain BBH18).